The following is a 600-amino-acid chain: Intraflagellar transport protein 74 homolog (600 aa).

The segment at 1–33 (MASNHKSSAARPVSRGGVGLTGRPPSGIRPLSG) is disordered. The basic region stretch occupies residues 1–90 (MASNHKSSAA…KTGTKGPQRQ (90 aa)). Arg-51 carries the post-translational modification Omega-N-methylarginine. Thr-73 bears the Phosphothreonine mark. A coiled-coil region spans residues 98-482 (LGLLRSKISE…KIKQMTTDLE (385 aa)). Positions 561-600 (EFIATKSQESDYQPIKKNVTKQIAEYNKTIVDALHSTSGN) are important for interaction with IFT27.

It belongs to the IFT74 family. As to quaternary structure, component of the IFT complex B, at least composed of IFT20, IFT22, IFT25, IFT27, IFT46, IFT52, TRAF3IP1/IFT54, IFT57, IFT74, IFT80, IFT81, and IFT88. Interacts with IFT81; the interaction is direct. Within the IFT complex B, IFT74 and IFT81 mediate the transport of tubulin within the cilium. Interacts (via basic region) with beta-tubulin (via acidic region); interaction is direct. Interacts with ARL13B and IFT88. Interacts (via the IFT74/IFT81 heterodimer) with RABL2B. Interacts with IFT57 and IFT70B. In terms of tissue distribution, highly expressed in adult and fetal kidney and expressed at lower level in adult heart, placenta, lung, liver and pancreas, and in fetal heart, lung and liver. Little to no expression was detected in adult brain and skeletal muscle or in fetal brain, thymus and spleen. Detected in sperm (at protein level).

Its subcellular location is the cell projection. The protein localises to the cilium. The protein resides in the cytoplasmic vesicle. It is found in the flagellum. It localises to the secretory vesicle. Its subcellular location is the acrosome. In terms of biological role, component of the intraflagellar transport (IFT) complex B: together with IFT81, forms a tubulin-binding module that specifically mediates transport of tubulin within the cilium. Binds beta-tubulin via its basic region. Required for ciliogenesis. Essential for flagellogenesis during spermatogenesis. This is Intraflagellar transport protein 74 homolog (IFT74) from Homo sapiens (Human).